A 350-amino-acid polypeptide reads, in one-letter code: MEALAPGRAPRGRRRAGASGSVLSPLSLAAVLLCALLRAPPAVGHLARLPRSIHLTQDSLKIVGSTHFPVSVYVMLHQKSPHVLCVTQRLRNTELVDPSFQWHGPKGKLVSENTTAQVTSTGSLIFQSFEETMSGVYTCFLEYKPTVEESIKNLQLKYIVYAYREPRFYYQFTARYHAAPCNSIYNISFEKKLLQILSKLVLDLSCEISLIKSECHRVKMQRAGLQNELFFTFSVASIDTEKGSKPCTDHSCEASKRLSKAKNLIERFFIQQVEVLGKRAEPLPEIYYIEGTLQMVWVNRCFPGYGINVLKHPKCPECCVVCSPGSFNPRDGTHCLQCNNSLVYGAKTCM.

Positions 1-44 (MEALAPGRAPRGRRRAGASGSVLSPLSLAAVLLCALLRAPPAVG) are cleaved as a signal peptide. N-linked (GlcNAc...) asparagine glycans are attached at residues N113, N186, and N339.

Belongs to the zona pellucida-binding protein Sp38 family. In terms of processing, N-glycosylated. As to expression, expressed in testis (at protein level). Expressed in male germ cells.

The protein resides in the cytoplasmic vesicle. It localises to the secretory vesicle. Its subcellular location is the acrosome. It is found in the acrosome membrane. The protein localises to the secreted. Functionally, plays a role in acrosome compaction and sperm morphogenesis. Is implicated in sperm-oocyte interaction during fertilization. This chain is Zona pellucida-binding protein 1 (Zpbp), found in Mus musculus (Mouse).